The primary structure comprises 734 residues: Photosystem I P700 chlorophyll a apoprotein A2 (734 aa).

A run of 8 helical transmembrane segments spans residues 46-69 (IFASHFGQLAIIFLWTSGNLFHVA), 135-158 (LYTGALFLLFLSALSLIGGWLHLQ), 175-199 (LNHHLSGLFGVSSLAWTGHLVHVAI), 273-291 (MAHHHLAIAILFLIAGHMY), 330-353 (IHFQLGLALASLGVITSLVAQHMY), 369-395 (AALYTHHQYIAGFIMTGAFAHGAIFFI), 417-439 (AIISHLSWASLFLGFHTLGLYVH), and 517-535 (FLVHHAIALGLHTTTLILV). 2 residues coordinate [4Fe-4S] cluster: Cys-559 and Cys-568. The next 2 membrane-spanning stretches (helical) occupy residues 575–596 (AFYLAVFWMLNTIGWVTFYWHW) and 643–665 (LSVWAWMFLFGHLVWATGFMFLI). Chlorophyll a is bound by residues His-654, Met-662, and Tyr-670. Trp-671 contacts phylloquinone. The helical transmembrane segment at 707–727 (LVGLAHFSVGYIFTYAAFLIA) threads the bilayer.

Belongs to the PsaA/PsaB family. In terms of assembly, the PsaA/B heterodimer binds the P700 chlorophyll special pair and subsequent electron acceptors. PSI consists of a core antenna complex that captures photons, and an electron transfer chain that converts photonic excitation into a charge separation. The eukaryotic PSI reaction center is composed of at least 11 subunits. The cofactor is P700 is a chlorophyll a/chlorophyll a' dimer, A0 is one or more chlorophyll a, A1 is one or both phylloquinones and FX is a shared 4Fe-4S iron-sulfur center..

Its subcellular location is the plastid. It is found in the chloroplast thylakoid membrane. The catalysed reaction is reduced [plastocyanin] + hnu + oxidized [2Fe-2S]-[ferredoxin] = oxidized [plastocyanin] + reduced [2Fe-2S]-[ferredoxin]. Its function is as follows. PsaA and PsaB bind P700, the primary electron donor of photosystem I (PSI), as well as the electron acceptors A0, A1 and FX. PSI is a plastocyanin-ferredoxin oxidoreductase, converting photonic excitation into a charge separation, which transfers an electron from the donor P700 chlorophyll pair to the spectroscopically characterized acceptors A0, A1, FX, FA and FB in turn. Oxidized P700 is reduced on the lumenal side of the thylakoid membrane by plastocyanin. The protein is Photosystem I P700 chlorophyll a apoprotein A2 of Lobularia maritima (Sweet alyssum).